A 62-amino-acid polypeptide reads, in one-letter code: Large ribosomal subunit protein bL33 (62 aa).

The protein belongs to the bacterial ribosomal protein bL33 family.

The chain is Large ribosomal subunit protein bL33 from Cyanothece sp. (strain PCC 7425 / ATCC 29141).